A 460-amino-acid polypeptide reads, in one-letter code: Ammonium transporter Rh type C (460 aa).

The Cytoplasmic portion of the chain corresponds to M1–W9. The chain crosses the membrane as a helical span at residues R10 to V30. Topologically, residues R31–Y61 are extracellular. N-linked (GlcNAc...) asparagine glycosylation occurs at N48. The chain crosses the membrane as a helical span at residues P62–L82. Over Q83–S89 the chain is Cytoplasmic. The helical transmembrane segment at V90 to W110 threads the bilayer. The Extracellular segment spans residues L111–N125. Residues L126–G145 traverse the membrane as a helical segment. Over K146–Q151 the chain is Cytoplasmic. A helical transmembrane segment spans residues L152 to L174. Topologically, residues E175–S179 are extracellular. A helical transmembrane segment spans residues G180–L200. Residues Y201–D219 are Cytoplasmic-facing. The chain crosses the membrane as a helical span at residues L220–I240. At S241 to A251 the chain is on the extracellular side. Residues I252–L272 form a helical membrane-spanning segment. Residues H273–N285 are Cytoplasmic-facing. The helical transmembrane segment at A286 to L303 threads the bilayer. The Extracellular segment spans residues P304 to G306. Residues S307–L329 form a helical membrane-spanning segment. At E330–G346 the chain is on the cytoplasmic side. A helical membrane pass occupies residues I347–L367. Topologically, residues Y368–A396 are extracellular. A helical membrane pass occupies residues A397 to L417. At R418–P460 the chain is on the cytoplasmic side.

Belongs to the ammonium transporter (TC 2.A.49) family. Rh subfamily. In terms of assembly, homotrimer. Post-translationally, N-glycosylated.

It localises to the apical cell membrane. The catalysed reaction is NH4(+)(in) = NH4(+)(out). The enzyme catalyses methylamine(out) = methylamine(in). It catalyses the reaction CO2(out) = CO2(in). Functionally, ammonium transporter involved in the maintenance of acid-base homeostasis. Transports ammonium and its related derivative methylammonium across the plasma membrane of epithelial cells likely contributing to renal transepithelial ammonia transport and ammonia metabolism. Postulated to primarily mediate an electroneutral bidirectional transport of NH3 ammonia species according to a mechanism that implies interaction of an NH4(+) ion with acidic residues of the pore entry followed by dissociation of NH4(+) into NH3 and H(+). As a result NH3 transits through the central pore and is protonated on the extracellular side reforming NH4(+). May act as a CO2 channel providing for renal acid secretion. The sequence is that of Ammonium transporter Rh type C (RHCG) from Bos taurus (Bovine).